The primary structure comprises 126 residues: C-type natriuretic peptide (126 aa).

The first 23 residues, 1–23 (MHLSQLLACALLLSLLSLRPSEA), serve as a signal peptide directing secretion. The disordered stretch occupies residues 20-71 (PSEAKPGAPPKVPRTPPGEEVAEPQAAGGGQKKGDKTPGGGGANLKDDRSRL). The propeptide occupies 24 to 73 (KPGAPPKVPRTPPGEEVAEPQAAGGGQKKGDKTPGGGGANLKDDRSRLLR). Positions 26 to 35 (GAPPKVPRTP) are enriched in pro residues. A compositionally biased stretch (gly residues) spans 46–62 (AGGGQKKGDKTPGGGGA). A disulfide bridge connects residues cysteine 110 and cysteine 126.

This sequence belongs to the natriuretic peptide family. Post-translationally, degraded by IDE (in vitro).

The protein resides in the secreted. Its function is as follows. Hormone which plays a role in endochondral ossification through regulation of cartilaginous growth plate chondrocytes proliferation and differentiation. May also be vasoactive and natriuretic. Acts by specifically binding and stimulating NPR2 to produce cGMP. Binds the clearance receptor NPR3. This is C-type natriuretic peptide (NPPC) from Ovis aries (Sheep).